A 386-amino-acid polypeptide reads, in one-letter code: Succinate--CoA ligase [ADP-forming] subunit beta (386 aa).

Residues 9 to 235 (KELFAKHDVP…REEEDPLESA (227 aa)) enclose the ATP-grasp domain. Residues Lys-44, 51 to 53 (GRG), Ala-93, and Glu-98 contribute to the ATP site. Mg(2+) is bound by residues Asn-190 and Asp-204. Substrate is bound by residues Asn-255 and 317–319 (GIT).

Belongs to the succinate/malate CoA ligase beta subunit family. As to quaternary structure, heterotetramer of two alpha and two beta subunits. It depends on Mg(2+) as a cofactor.

It catalyses the reaction succinate + ATP + CoA = succinyl-CoA + ADP + phosphate. The enzyme catalyses GTP + succinate + CoA = succinyl-CoA + GDP + phosphate. It participates in carbohydrate metabolism; tricarboxylic acid cycle; succinate from succinyl-CoA (ligase route): step 1/1. In terms of biological role, succinyl-CoA synthetase functions in the citric acid cycle (TCA), coupling the hydrolysis of succinyl-CoA to the synthesis of either ATP or GTP and thus represents the only step of substrate-level phosphorylation in the TCA. The beta subunit provides nucleotide specificity of the enzyme and binds the substrate succinate, while the binding sites for coenzyme A and phosphate are found in the alpha subunit. The polypeptide is Succinate--CoA ligase [ADP-forming] subunit beta (Nocardioides sp. (strain ATCC BAA-499 / JS614)).